Here is a 331-residue protein sequence, read N- to C-terminus: Probable protein phosphatase 2C 1 (331 aa).

Residues 1–29 form a disordered region; that stretch reads MAASSTATRLSPPRLHAPTTPSPHLPLRR. Residues 48-292 enclose the PPM-type phosphatase domain; sequence THLIPHPRKA…DDITVIVAQV (245 aa). D79, G80, D210, and D283 together coordinate Mn(2+). Residues 300 to 331 are disordered; the sequence is DEGVDEEKGQGDEQGSAVAVASSEQKEDSITT.

It belongs to the PP2C family. Requires Mg(2+) as cofactor. The cofactor is Mn(2+).

It catalyses the reaction O-phospho-L-seryl-[protein] + H2O = L-seryl-[protein] + phosphate. The catalysed reaction is O-phospho-L-threonyl-[protein] + H2O = L-threonyl-[protein] + phosphate. The protein is Probable protein phosphatase 2C 1 of Oryza sativa subsp. japonica (Rice).